The primary structure comprises 321 residues: Anther-specific protein TA-29 (321 aa).

Residues 301–321 (RSDEEEAHHQSKQHKDEDIIN) form a disordered region.

In terms of tissue distribution, anther specific (tapetal cells).

The protein is Anther-specific protein TA-29 (TA-29) of Nicotiana tabacum (Common tobacco).